The primary structure comprises 349 residues: Protein BPS1, chloroplastic (349 aa).

Residues 1–43 (MARPQDPPRGFFPFGNPFKNLSSKNSVLSSKLLPLLNNFETNL) constitute a chloroplast transit peptide.

Expressed in roots, hypocotyls, cotyledons, leaves, flowers and siliques.

The protein localises to the plastid. Its subcellular location is the chloroplast. Required for normal root and shoot development. Prevents constitutive production of a root mobile carotenoid-derived signaling compound that is capable of arresting shoot and leaf development. The sequence is that of Protein BPS1, chloroplastic from Arabidopsis thaliana (Mouse-ear cress).